The following is a 267-amino-acid chain: 26S proteasome non-ATPase regulatory subunit 8 homolog A (267 aa).

Position 1 is an N-acetylmethionine (Met-1). Residues 79–251 (DAFERDFFQL…APCKEIPSLQ (173 aa)) enclose the PCI domain.

This sequence belongs to the proteasome subunit S14 family. Component of the 19S regulatory particle (RP/PA700) lid subcomplex of the 26S proteasome. The 26S proteasome is composed of a core protease (CP), known as the 20S proteasome, capped at one or both ends by the 19S regulatory particle (RP/PA700). The RP/PA700 complex is composed of at least 17 different subunits in two subcomplexes, the base and the lid, which form the portions proximal and distal to the 20S proteolytic core, respectively. Interacts with PUB22 and PUB23. Binds to the translation initiation factors TIF3E1. Interacts with UCH1 and UCH2. Post-translationally, ubiquitinated by PUB22 and PUB23. As to expression, ubiquitous with highest expression in flowers.

In terms of biological role, acts as a regulatory subunit of the 26S proteasome which is involved in the ATP-dependent degradation of ubiquitinated proteins. May help to control the degradation of one or more factors that repress cytokinin signaling. Plays an important role for balancing cell expansion with cell proliferation rates during shoot development. The protein is 26S proteasome non-ATPase regulatory subunit 8 homolog A of Arabidopsis thaliana (Mouse-ear cress).